Reading from the N-terminus, the 218-residue chain is N-(5'-phosphoribosyl)anthranilate isomerase (218 aa).

It belongs to the TrpF family.

The catalysed reaction is N-(5-phospho-beta-D-ribosyl)anthranilate = 1-(2-carboxyphenylamino)-1-deoxy-D-ribulose 5-phosphate. Its pathway is amino-acid biosynthesis; L-tryptophan biosynthesis; L-tryptophan from chorismate: step 3/5. The sequence is that of N-(5'-phosphoribosyl)anthranilate isomerase from Lachnoclostridium phytofermentans (strain ATCC 700394 / DSM 18823 / ISDg) (Clostridium phytofermentans).